The primary structure comprises 307 residues: Ribulose bisphosphate carboxylase/oxygenase activase, chloroplastic (307 aa).

A chloroplast-targeting transit peptide spans 1 to 46 (MSIPDDKEAGTIDEFLQKEGVLDILQKLDHDLVGLKPVKDRVREIA). 73–80 (GSPGTGKT) is an ATP binding site.

It belongs to the CbxX/CfxQ family. In terms of assembly, forms homooligomers. Forms heterohexameric rings with the plastid-encoded Rca subunit consisting of 3 of each nuclear- and plastidial-encoded subunits that alternate in the ring.

The protein resides in the plastid. Its subcellular location is the chloroplast. Required for the expression of ribulose 1,5-bisphosphate carboxylase/oxygenase (RuBisCo). ATPase involved in the activation of red-type RuBisCo, which tends to form inactive complexes with its substrate ribulose 1,5-bisphosphate (RuBP). Catalyzes the release of RuBP from inhibited RuBisCo in an ATP-dependent manner. Activation of RuBisCO involves the ATP-dependent carboxylation of the epsilon-amino group of lysine leading to a carbamate structure. The nuclear-encoded subunit plays a more critical role in activase function than the plastidial-encoded subunit. This Cyanidioschyzon merolae (strain NIES-3377 / 10D) (Unicellular red alga) protein is Ribulose bisphosphate carboxylase/oxygenase activase, chloroplastic.